The sequence spans 600 residues: Elongation factor 4 (600 aa).

The tr-type G domain maps to 6–188 (QFIRNFSIIA…QITKQIPSPK (183 aa)). Residues 18–23 (DHGKST) and 135–138 (NKID) each bind GTP.

It belongs to the TRAFAC class translation factor GTPase superfamily. Classic translation factor GTPase family. LepA subfamily.

The protein resides in the cell inner membrane. It catalyses the reaction GTP + H2O = GDP + phosphate + H(+). In terms of biological role, required for accurate and efficient protein synthesis under certain stress conditions. May act as a fidelity factor of the translation reaction, by catalyzing a one-codon backward translocation of tRNAs on improperly translocated ribosomes. Back-translocation proceeds from a post-translocation (POST) complex to a pre-translocation (PRE) complex, thus giving elongation factor G a second chance to translocate the tRNAs correctly. Binds to ribosomes in a GTP-dependent manner. The polypeptide is Elongation factor 4 (Leptospira interrogans serogroup Icterohaemorrhagiae serovar copenhageni (strain Fiocruz L1-130)).